A 357-amino-acid chain; its full sequence is UPF0283 membrane protein BMEA_A1074 (357 aa).

The interval 1 to 36 (MSDKTPRKPTAFRLEQPARVSAASEQEEPRRPRAVK) is disordered. The span at 27-36 (EEPRRPRAVK) shows a compositional bias: basic and acidic residues. A run of 2 helical transmembrane segments spans residues 78–98 (ILFG…TEDL) and 109–129 (LGWT…AIIL).

Belongs to the UPF0283 family.

Its subcellular location is the cell inner membrane. This Brucella melitensis biotype 2 (strain ATCC 23457) protein is UPF0283 membrane protein BMEA_A1074.